Here is a 501-residue protein sequence, read N- to C-terminus: Arabinose import ATP-binding protein AraG (501 aa).

ABC transporter domains lie at 4-239 (LEFN…MVGR) and 252-495 (LGDN…LPDK). 36–43 (GENGAGKS) lines the ATP pocket.

It belongs to the ABC transporter superfamily. Arabinose importer (TC 3.A.1.2.2) family. In terms of assembly, the complex is composed of two ATP-binding proteins (AraG), two transmembrane proteins (AraH) and a solute-binding protein (AraF).

The protein localises to the cell inner membrane. It carries out the reaction L-arabinose(out) + ATP + H2O = L-arabinose(in) + ADP + phosphate + H(+). Part of the ABC transporter complex AraFGH involved in arabinose import. Responsible for energy coupling to the transport system. The protein is Arabinose import ATP-binding protein AraG of Rhizobium etli (strain ATCC 51251 / DSM 11541 / JCM 21823 / NBRC 15573 / CFN 42).